The following is a 299-amino-acid chain: Oxygen-dependent coproporphyrinogen-III oxidase (299 aa).

Ser92 contacts substrate. Residues His96 and His106 each contribute to the a divalent metal cation site. Residue His106 is the Proton donor of the active site. Asn108–Arg110 is a substrate binding site. A divalent metal cation is bound by residues His145 and His175. The tract at residues Tyr240–Glu275 is important for dimerization. Gly258–Arg260 lines the substrate pocket.

This sequence belongs to the aerobic coproporphyrinogen-III oxidase family. In terms of assembly, homodimer. The cofactor is a divalent metal cation.

Its subcellular location is the cytoplasm. The catalysed reaction is coproporphyrinogen III + O2 + 2 H(+) = protoporphyrinogen IX + 2 CO2 + 2 H2O. It participates in porphyrin-containing compound metabolism; protoporphyrin-IX biosynthesis; protoporphyrinogen-IX from coproporphyrinogen-III (O2 route): step 1/1. Involved in the heme biosynthesis. Catalyzes the aerobic oxidative decarboxylation of propionate groups of rings A and B of coproporphyrinogen-III to yield the vinyl groups in protoporphyrinogen-IX. This is Oxygen-dependent coproporphyrinogen-III oxidase from Klebsiella pneumoniae subsp. pneumoniae (strain ATCC 700721 / MGH 78578).